We begin with the raw amino-acid sequence, 172 residues long: Cytidylate kinase (172 aa).

An ATP-binding site is contributed by 7–15 (GPPGSGTST).

The protein belongs to the cytidylate kinase family. Type 2 subfamily.

Its subcellular location is the cytoplasm. The enzyme catalyses CMP + ATP = CDP + ADP. It catalyses the reaction dCMP + ATP = dCDP + ADP. The protein is Cytidylate kinase of Methanothrix thermoacetophila (strain DSM 6194 / JCM 14653 / NBRC 101360 / PT) (Methanosaeta thermophila).